The following is a 361-amino-acid chain: Transposase A from transposon Tn554 (361 aa).

Positions 23 to 120 constitute a Core-binding (CB) domain; the sequence is YQLIEPVMKF…VVMSFLDYLS (98 aa). The Tyr recombinase domain maps to 163–351; that stretch reads KQIRTLRSKE…SDQDMKNEFN (189 aa). Residues Arg198, Lys232, His302, Arg305, and His328 contribute to the active site. The active-site O-(3'-phospho-DNA)-tyrosine intermediate is the Tyr338.

It belongs to the 'phage' integrase family.

Its function is as follows. One of three proteins encoded by transposon Tn554 required for its transposition. This chain is Transposase A from transposon Tn554 (tnpA1), found in Staphylococcus aureus (strain Mu50 / ATCC 700699).